The primary structure comprises 180 residues: Tubulin polymerization-promoting protein homolog (180 aa).

2 stretches are compositionally biased toward basic and acidic residues: residues 136 to 158 (TGAHKERFDAEGKGKGKSGRADT) and 169 to 180 (KNKDSYDKTHGK). The interval 136–180 (TGAHKERFDAEGKGKGKSGRADTTENTGYVGAYKNKDSYDKTHGK) is disordered.

This sequence belongs to the TPPP family.

Regulator of microtubule dynamics. In Caenorhabditis elegans, this protein is Tubulin polymerization-promoting protein homolog.